The following is a 416-amino-acid chain: MLKRDMNIADYDAELFAAIQEETARQEEHIELIASENYTSPRVMEAQGSQLTNKYAEGYPGKRYYGGCEFVDKAEQLAIDRACQLFGAEYANVQPHSGSQANNAVYMALLNPGDTVLGMSLAHGGHLTHGSPVNFSGKLYNIIPYGIDETGQIDYEEMEALALEHKPKMIIGGFSAYSQVVDWKRMREIADKVGAYFFVDMAHVAGLIAAGVYPNPVPHAHVVTTTTHKTLAGPRGGLILSNDGEALYKKLNSAVFPGGQGGPLMHVIAAKAVAFKEAMEPEFKVYQACVVENAKAMVGEFLERGYKIVSGSTENHLFLVDLIDKGITGKEADAALGAANITVNKNSVPNDPRSPFVTSGIRIGTPSITRRGFTVEDTKQLAGWICDVLDNTDKPEVIEATKAKVLEICKRLPVYA.

(6S)-5,6,7,8-tetrahydrofolate contacts are provided by residues Leu-121 and 125 to 127 (GHL). Lys-229 is subject to N6-(pyridoxal phosphate)lysine. (6S)-5,6,7,8-tetrahydrofolate is bound by residues Glu-245 and 354 to 356 (SPF).

This sequence belongs to the SHMT family. Homodimer. The cofactor is pyridoxal 5'-phosphate.

It localises to the cytoplasm. The catalysed reaction is (6R)-5,10-methylene-5,6,7,8-tetrahydrofolate + glycine + H2O = (6S)-5,6,7,8-tetrahydrofolate + L-serine. It functions in the pathway one-carbon metabolism; tetrahydrofolate interconversion. The protein operates within amino-acid biosynthesis; glycine biosynthesis; glycine from L-serine: step 1/1. Catalyzes the reversible interconversion of serine and glycine with tetrahydrofolate (THF) serving as the one-carbon carrier. This reaction serves as the major source of one-carbon groups required for the biosynthesis of purines, thymidylate, methionine, and other important biomolecules. Also exhibits THF-independent aldolase activity toward beta-hydroxyamino acids, producing glycine and aldehydes, via a retro-aldol mechanism. The sequence is that of Serine hydroxymethyltransferase 1 from Photobacterium profundum (strain SS9).